A 284-amino-acid chain; its full sequence is Spermidine synthase (284 aa).

The 236-residue stretch at 6–241 folds into the PABS domain; the sequence is NGWFSEISEF…GSIGFILCSL (236 aa). Gln37 contacts S-adenosyl 3-(methylsulfanyl)propylamine. A putrescine-binding site is contributed by Tyr67. Residues Gln68, Asp92, Glu112, 143–144, and Asp161 each bind S-adenosyl 3-(methylsulfanyl)propylamine; that span reads DG. The Proton acceptor role is filled by Asp161. Residues 161–164 and Tyr229 each bind putrescine; that span reads DSSD.

This sequence belongs to the spermidine/spermine synthase family.

It carries out the reaction S-adenosyl 3-(methylsulfanyl)propylamine + putrescine = S-methyl-5'-thioadenosine + spermidine + H(+). It participates in amine and polyamine biosynthesis; spermidine biosynthesis; spermidine from putrescine: step 1/1. Catalyzes the production of spermidine from putrescine and decarboxylated S-adenosylmethionine (dcSAM). Has a strong preference for putrescine as substrate. In Dictyostelium discoideum (Social amoeba), this protein is Spermidine synthase (spsA).